The sequence spans 835 residues: Adhesion G protein-coupled receptor E5 (835 aa).

Residues 1 to 20 form the signal peptide; sequence MGGRVFLAFCVWLTLPGAET. Residues 21-552 are Extracellular-facing; sequence QDSRGCARWC…EDWKLTLITR (532 aa). Residues 22–63 enclose the EGF-like 1 domain; the sequence is DSRGCARWCPQNSSCVNATACRCNPGFSSFSEIITTPTETCD. 15 cysteine pairs are disulfide-bonded: C26–C36, C30–C42, C44–C62, C68–C82, C76–C91, C93–C114, C120–C133, C127–C142, C144–C158, C164–C177, C171–C186, C188–C207, C213–C226, C220–C235, and C237–C256. Residues N33 and N38 are each glycosylated (N-linked (GlcNAc...) asparagine). Positions 64–115 constitute an EGF-like 2; calcium-binding domain; it reads DINECATPSKVSCGKFSDCWNTEGSYDCVCSPGYEPVSGAKTFKNESENTCQ. N-linked (GlcNAc...) asparagine glycosylation is present at N108. Positions 116-159 constitute an EGF-like 3; calcium-binding domain; the sequence is DVDECQQNPRLCKSYGTCVNTLGSYTCQCLPGFKFIPEDPKVCT. An EGF-like 4; calcium-binding domain is found at 160 to 208; it reads DVNECTSGQNPCHSSTHCLNNVGSYQCRCRPGWQPIPGSPNGPNNTVCE. Residue N203 is glycosylated (N-linked (GlcNAc...) asparagine). The 49-residue stretch at 209-257 folds into the EGF-like 5; calcium-binding domain; it reads DVDECSSGQHQCDSSTVCFNTVGSYSCRCRPGWKPRHGIPNNQKDTVCE. The GAIN-B domain occupies 349 to 543; sequence PFTYISPSNT…AILMAHYDVE (195 aa). Residues N371, N406, N413, N453, and N520 are each glycosylated (N-linked (GlcNAc...) asparagine). 2 disulfides stabilise this stretch: C495–C525 and C513–C527. Residues 495–543 are GPS; it reads CAFWKSDSDRGGHWATEGCQVLGSKNGSTTCQCSHLSSFAILMAHYDVE. A helical transmembrane segment spans residues 553 to 572; it reads VGLALSLFCLLLCILTFLLV. The Cytoplasmic portion of the chain corresponds to 573–581; sequence RPIQGSRTT. The helical transmembrane segment at 582–601 threads the bilayer; that stretch reads IHLHLCICLFVGSTIFLAGI. Residues 602-620 are Extracellular-facing; that stretch reads ENEGGQVGLRCRLVAGLLH. A helical membrane pass occupies residues 621–642; it reads YCFLAAFCWMSLEGLELYFLVV. The Cytoplasmic portion of the chain corresponds to 643 to 653; that stretch reads RVFQGQGLSTR. The helical transmembrane segment at 654-674 threads the bilayer; that stretch reads WLCLIGYGVPLLIVGVSAAIY. The Extracellular portion of the chain corresponds to 675 to 691; sequence SKGYGRPRYCWLDFEQG. Residues 692–712 form a helical membrane-spanning segment; that stretch reads FLWSFLGPVTFIILCNAVIFV. The Cytoplasmic portion of the chain corresponds to 713-739; the sequence is TTVWKLTQKFSEINPDMKKLKKARALT. Residues 740-760 traverse the membrane as a helical segment; it reads ITAIAQLFLLGCTWVFGLFIF. At 761–766 the chain is on the extracellular side; the sequence is DDRSLV. A helical membrane pass occupies residues 767 to 789; that stretch reads LTYVFTILNCLQGAFLYLLHCLL. The Cytoplasmic segment spans residues 790 to 835; the sequence is NKKVREEYRKWACLVAGGSKYSEFTSTTSGTGHNQTRALRASESGI. Residues 814 to 826 are compositionally biased toward polar residues; sequence TSTTSGTGHNQTR. The tract at residues 814 to 835 is disordered; it reads TSTTSGTGHNQTRALRASESGI. S815 bears the Phosphoserine mark. Residue T816 is modified to Phosphothreonine. Phosphoserine is present on S818. T825 carries the post-translational modification Phosphothreonine. S831 and S833 each carry phosphoserine.

This sequence belongs to the G-protein coupled receptor 2 family. LN-TM7 subfamily. As to quaternary structure, forms a heterodimer, consisting of a large extracellular region (alpha subunit) non-covalently linked to a seven-transmembrane moiety (beta subunit). Interacts with complement decay-accelerating factor (DAF). The largest isoform (isoform 1) interacts with chondroitin sulfate. In terms of processing, proteolytically cleaved into 2 subunits, an extracellular alpha subunit and a seven-transmembrane subunit. In terms of tissue distribution, broadly expressed, found on most hematopoietic cells, including activated lymphocytes, monocytes, macrophages, dendritic cells, and granulocytes. Expressed also abundantly by smooth muscle cells. Expressed in thyroid, colorectal, gastric, esophageal and pancreatic carcinomas too. Expression are increased under inflammatory conditions in the CNS of multiple sclerosis and in synovial tissue of patients with rheumatoid arthritis. Increased expression of CD97 in the synovium is accompanied by detectable levels of soluble CD97 in the synovial fluid.

The protein resides in the cell membrane. It localises to the secreted. The protein localises to the extracellular space. Its function is as follows. Receptor potentially involved in both adhesion and signaling processes early after leukocyte activation. Plays an essential role in leukocyte migration. The polypeptide is Adhesion G protein-coupled receptor E5 (Homo sapiens (Human)).